A 321-amino-acid polypeptide reads, in one-letter code: Epoxyqueuosine reductase (321 aa).

The active-site Proton donor is the Asp137. Residues 179–211 (EPLNADPPARSLCGRCSACIDACPTHAIREPFV) enclose the 4Fe-4S ferredoxin-type domain. Positions 191, 194, 197, 201, 217, 245, 248, and 252 each coordinate [4Fe-4S] cluster.

This sequence belongs to the QueG family. As to quaternary structure, monomer. Requires cob(II)alamin as cofactor. The cofactor is [4Fe-4S] cluster.

Its subcellular location is the cytoplasm. The catalysed reaction is epoxyqueuosine(34) in tRNA + AH2 = queuosine(34) in tRNA + A + H2O. Its pathway is tRNA modification; tRNA-queuosine biosynthesis. Functionally, catalyzes the conversion of epoxyqueuosine (oQ) to queuosine (Q), which is a hypermodified base found in the wobble positions of tRNA(Asp), tRNA(Asn), tRNA(His) and tRNA(Tyr). The sequence is that of Epoxyqueuosine reductase from Synechococcus sp. (strain CC9605).